The chain runs to 184 residues: Ferredoxin-thioredoxin reductase subunit A2, chloroplastic (184 aa).

A chloroplast-targeting transit peptide spans 1-71 (MTNSYALSPA…SRKNPKSTIR (71 aa)).

It belongs to the ferredoxin thioredoxin reductase alpha subunit family. Heterodimer of subunit A (variable subunit) and subunit B (catalytic subunit). Heterodimeric FTR forms a complex with ferredoxin and thioredoxin.

It localises to the plastid. It is found in the chloroplast. Functionally, variable subunit of the ferredoxin-thioredoxin reductase (FTR), which catalyzes the two-electron reduction of thioredoxins by the electrons provided by reduced ferredoxin. This Arabidopsis thaliana (Mouse-ear cress) protein is Ferredoxin-thioredoxin reductase subunit A2, chloroplastic.